The following is a 493-amino-acid chain: Probable cytochrome P450 CYP36A1 (493 aa).

A run of 3 helical transmembrane segments spans residues 1–21, 60–80, and 290–310; these read MLFA…CRFA, GGIF…YDML, and QLIV…IIVL. Position 440 (Cys440) interacts with heme.

It belongs to the cytochrome P450 family. Heme serves as cofactor.

Its subcellular location is the membrane. Cytochromes P450 are a group of heme-thiolate monooxygenases. They oxidize a variety of structurally unrelated compounds, including steroids, fatty acids, and xenobiotics. This Caenorhabditis elegans protein is Probable cytochrome P450 CYP36A1 (cyp-36A1).